A 217-amino-acid chain; its full sequence is External core antigen (217 aa).

The signal sequence occupies residues 1–19; sequence MYLFHLCLVFACVPCPTFQ. Residues 26–28 form an HBEAG region; it reads GWL. The tract at residues 180 to 217 is disordered; that stretch reads RRGGARASRSPRRRTPSPRRRRSQSPRRRRSQSPSANC. A compositionally biased stretch (basic residues) spans 188–210; it reads RSPRRRTPSPRRRRSQSPRRRRS. The stretch at 189 to 195 is one 1; half-length repeat; that stretch reads SPRRRTP. A 3 X 8 AA repeats of S-P-R-R-R-R-S-Q region spans residues 189–211; that stretch reads SPRRRTPSPRRRRSQSPRRRRSQ. Residues 189 to 217 constitute a propeptide that is removed on maturation; the sequence is SPRRRTPSPRRRRSQSPRRRRSQSPSANC. A run of 2 repeats spans residues 196 to 203 and 204 to 211.

Belongs to the orthohepadnavirus precore antigen family. Homodimerizes. In terms of processing, phosphorylated. Post-translationally, cleaved by host furin.

It localises to the secreted. Its subcellular location is the host nucleus. Functionally, may regulate immune response to the intracellular capsid in acting as a T-cell tolerogen, by having an immunoregulatory effect which prevents destruction of infected cells by cytotoxic T-cells. This immune regulation may predispose to chronicity during perinatal infections and prevent severe liver injury during adult infections. This chain is External core antigen, found in Marmota monax (Woodchuck).